The sequence spans 314 residues: Lipoyl synthase (314 aa).

The [4Fe-4S] cluster site is built by cysteine 40, cysteine 45, cysteine 51, cysteine 67, cysteine 71, cysteine 74, and serine 280. One can recognise a Radical SAM core domain in the interval 53–269 (SERKTATFMI…KNIALEKGFS (217 aa)).

This sequence belongs to the radical SAM superfamily. Lipoyl synthase family. The cofactor is [4Fe-4S] cluster.

The protein localises to the cytoplasm. It catalyses the reaction [[Fe-S] cluster scaffold protein carrying a second [4Fe-4S](2+) cluster] + N(6)-octanoyl-L-lysyl-[protein] + 2 oxidized [2Fe-2S]-[ferredoxin] + 2 S-adenosyl-L-methionine + 4 H(+) = [[Fe-S] cluster scaffold protein] + N(6)-[(R)-dihydrolipoyl]-L-lysyl-[protein] + 4 Fe(3+) + 2 hydrogen sulfide + 2 5'-deoxyadenosine + 2 L-methionine + 2 reduced [2Fe-2S]-[ferredoxin]. Its pathway is protein modification; protein lipoylation via endogenous pathway; protein N(6)-(lipoyl)lysine from octanoyl-[acyl-carrier-protein]. In terms of biological role, catalyzes the radical-mediated insertion of two sulfur atoms into the C-6 and C-8 positions of the octanoyl moiety bound to the lipoyl domains of lipoate-dependent enzymes, thereby converting the octanoylated domains into lipoylated derivatives. The protein is Lipoyl synthase of Oceanobacillus iheyensis (strain DSM 14371 / CIP 107618 / JCM 11309 / KCTC 3954 / HTE831).